Here is an 897-residue protein sequence, read N- to C-terminus: DNA endonuclease RBBP8 (897 aa).

The tract at residues 22 to 45 (DLWTKLKECHDREVQGLQVKVTKL) is essential for binding to the MRN complex and for RPA focus formation on DNA damage. Positions 35–84 (VQGLQVKVTKLKQERILDAQRLEEFFTKNQQLREQQKVLHETIKVLEDRL) form a coiled coil. Residues 45-160 (LKQERILDAQ…AELECEEDVI (116 aa)) are required for interaction with LMO4, probably by stabilizing the interaction through RPPB8 dimerization. Glycyl lysine isopeptide (Lys-Gly) (interchain with G-Cter in SUMO2) cross-links involve residues K62 and K115. Residues 117-138 (ITELMNERNTLQEENKKLSEQL) are a coiled coil. K193 participates in a covalent cross-link: Glycyl lysine isopeptide (Lys-Gly) (interchain with G-Cter in SUMO2). S233 and S276 each carry phosphoserine. Over residues 292-307 (KQPFEESTRNTEDSLR) the composition is skewed to basic and acidic residues. Residues 292-325 (KQPFEESTRNTEDSLRFSDSTSKTPPQEELPTRV) are disordered. T315 is subject to Phosphothreonine; by CDK2. Phosphoserine is present on residues S326, S327, and S349. Glycyl lysine isopeptide (Lys-Gly) (interchain with G-Cter in SUMO2) cross-links involve residues K360 and K378. The residue at position 379 (S379) is a Phosphoserine. Residues K396, K404, and K410 each participate in a glycyl lysine isopeptide (Lys-Gly) (interchain with G-Cter in SUMO2) cross-link. Residues 419–464 (QNRTEYGKDSNTDKHLEPLKSLGGRTSKRKKTEEESEHEVSCPQAS) are disordered. Basic and acidic residues predominate over residues 420–436 (NRTEYGKDSNTDKHLEP). Glycyl lysine isopeptide (Lys-Gly) (interchain with G-Cter in SUMO2) cross-links involve residues K438 and K449. A PXDLS motif motif is present at residues 490-494 (PLDLS). Positions 509-557 (SETSKNKFRQVTLYEALKTIPKGFSSSRKASDGNCTLPKDSPGEPCSQE) are damage-recruitment motif. A Glycyl lysine isopeptide (Lys-Gly) (interchain with G-Cter in SUMO2); alternate cross-link involves residue K526. Residues K530, K572, and K578 each participate in a glycyl lysine isopeptide (Lys-Gly) (interchain with G-Cter in SUMO2) cross-link. A Glycyl lysine isopeptide (Lys-Gly) (interchain with G-Cter in SUMO2); alternate cross-link involves residue K604. Residues K613, K638, and K640 each participate in a glycyl lysine isopeptide (Lys-Gly) (interchain with G-Cter in SUMO2) cross-link. The interval 641–685 (SLQNNQDVSFENIQWSIDPGADLSQYKMDVTVIDTKDGSQSKLGG) is required for interaction with LMO4, probably by making physical contact with LMO4. S664 is subject to Phosphoserine; by ATM. A Glycyl lysine isopeptide (Lys-Gly) (interchain with G-Cter in SUMO2) cross-link involves residue K676. Phosphoserine is present on S679. The interval 704–723 (KKQEQKGEKSSNEERKMNDS) is disordered. K719 is covalently cross-linked (Glycyl lysine isopeptide (Lys-Gly) (interchain with G-Cter in SUMO2)). Residue S723 is modified to Phosphoserine. The residue at position 745 (S745) is a Phosphoserine; by ATM. A Glycyl lysine isopeptide (Lys-Gly) (interchain with G-Cter in SUMO2) cross-link involves residue K782. Positions 840–842 (FRY) match the KLHL15-binding motif. T847 is subject to Phosphothreonine; by CDK1. T859 carries the post-translational modification Phosphothreonine; by ATR. K869 participates in a covalent cross-link: Glycyl lysine isopeptide (Lys-Gly) (interchain with G-Cter in SUMO2). The interval 873–897 (DPCPRPKRRQPYNAIFSPKGKEQKT) is disordered.

The protein belongs to the COM1/SAE2/CtIP family. Homotetramer; formed by antiparallel association of helical extensions protruding from the N-termini of two parallel coiled-coil dimers. Forms a dumbbell-shaped particle in which polar globular domains are held about 30 nm apart by a central rod. Homotetramerization is required for DNA-end resection and repair. Interacts (via the PXDLS motif) with CTBP1; the interaction is disrupted via binding of the adenovirus E1A to CTBP1. Component of the BRCA1-RBBP8 complex. Interacts (the Ser-327 phosphorylated form) with BRCA1 (via the C-terminal BRCT domains): the interaction occurs in the G2 phase, ubiquitinates RBBP8 and involves RBBP8 in BRCA1-dependent G2/M checkpoint control on DNA damage. Interacts with RB1. Interacts with the MRN complex; interacts directly with MRE11; the interaction is required for efficient homologous recombination (HR) and regulation of the MRN complex. Interacts directly with RAD50. Interacts (when phosphorylated by CDK1) with NBN; promoting association with the MRN complex. Interacts with LM04 (via the LIM zinc-binding 1 domain). Interacts with SIAH1. Interacts with RNF138. Interacts with EXD2. Interacts with CUL3 and KLHL15; this interaction leads to RBBP8 proteasomal degradation. Directly interacts with PIN1; this interaction depends upon RBBP8 phosphorylation, predominantly at Thr-315. Interacts with FZR1; this interaction leads to APC/C-mediated RBBP8 proteasomal degradation. Interacts with AUNIP; leading to recruitment of RBBP8 to sites of DNA damage. Interacts with SAMHD1. Interacts with HDGFL2. Hyperphosphorylation upon ionizing radiation results in dissociation from BRCA1. Phosphorylation at Thr-847 by CDK1 is essential for the recruitment to DNA and the DNA repair function. Phosphorylation at Thr-847 and Thr-859 promote interaction with NBN and recruitment to double-strand breaks (DSBs). Phosphorylated on Ser-327 as cells enter G2 phase. This phosphorylation is required for binding BRCA1 and for the G2/M DNA damage transition checkpoint control. Phosphorylation at Thr-315, probably catalyzed by CDK2, is required for PIN1-binding, while phosphorylation at Ser-276 serves as a PIN1 isomerization site. Phosphorylation at Thr-315 is cell-cycle dependent. It steadily increases during S phase, peaks at late S/G2 phase, and drops at G1. Phosphorylation is not required for tetramerization. Binds to DNA more strongly when dephosphorylated. In terms of processing, ubiquitinated. Ubiquitination at multiple sites by BRCA1 (via its N-terminal RING domain) does not lead to its proteasomal degradation but instead the ubiquitinated RBBP8 binds to chromatin following DNA damage and may play a role in G2/M checkpoint control. Ubiquitinated by RNF138 at its N-terminus. Ubiquitinated through 'Lys-48' by the E3 CUL3-KLHL15 complex; this modification leads to proteasomal degradation. Ubiquitinated by the E3 FZR1/APC/C complex; this modification leads to proteasomal degradation. In terms of tissue distribution, expressed in ER-positive breast cancer lines, but tends to be down-regulated ER-negative cells (at protein level).

The protein localises to the nucleus. It is found in the chromosome. In terms of biological role, endonuclease that cooperates with the MRE11-RAD50-NBN (MRN) complex in DNA-end resection, the first step of double-strand break (DSB) repair through the homologous recombination (HR) pathway. HR is restricted to S and G2 phases of the cell cycle and preferentially repairs DSBs resulting from replication fork collapse. Key determinant of DSB repair pathway choice, as it commits cells to HR by preventing classical non-homologous end-joining (NHEJ). Specifically promotes the endonuclease activity of the MRN complex to clear DNA ends containing protein adducts: recruited to DSBs by NBN following phosphorylation by CDK1, and promotes the endonuclease activity of MRE11 to clear protein-DNA adducts and generate clean double-strand break ends. Functions downstream of the MRN complex and ATM, promotes ATR activation and its recruitment to DSBs in the S/G2 phase facilitating the generation of ssDNA. Component of the BRCA1-RBBP8 complex that regulates CHEK1 activation and controls cell cycle G2/M checkpoints on DNA damage. During immunoglobulin heavy chain class-switch recombination, promotes microhomology-mediated alternative end joining (A-NHEJ) and plays an essential role in chromosomal translocations. Binds preferentially to DNA Y-junctions and to DNA substrates with blocked ends and promotes intermolecular DNA bridging. The polypeptide is DNA endonuclease RBBP8 (RBBP8) (Homo sapiens (Human)).